The following is a 736-amino-acid chain: Transcription factor E2F8 (736 aa).

Positions 1 to 26 (MEEGSKENCGFNGSPMGSRSPPKQLT) are disordered. A compositionally biased stretch (polar residues) spans 15 to 26 (PMGSRSPPKQLT). 2 consecutive DNA-binding regions follow at residues 98 to 167 (RKEK…IWHG) and 240 to 326 (RKEK…QWTC). Disordered regions lie at residues 386–405 (RRKI…GSSS), 435–456 (SACK…QTPT), 483–551 (EQTL…AVDD), and 716–736 (PGGM…GTDD). Residues 393–405 (PSSPIKSGDGSSS) are compositionally biased toward low complexity. Composition is skewed to basic and acidic residues over residues 509-539 (GRHE…DRGC) and 726-736 (SARKLDVGTDD).

Belongs to the E2F/DP family. Homodimer and heterodimer: mainly forms homodimers and, to a lesser extent, heterodimers with e2f7.

The protein resides in the nucleus. In terms of biological role, atypical E2F transcription factor that participates in various processes such as angiogenesis and polyploidization of specialized cells. Mainly acts as a transcription repressor that binds DNA independently of DP proteins and specifically recognizes the E2 recognition site 5'-TTTC[CG]CGC-3'. Directly represses transcription of classical E2F transcription factors such as e2f1. Acts as a regulator of S-phase by recognizing and binding the E2-related site 5'-TTCCCGCC-3' and mediating repression of G1/S-regulated genes. Acts as a promoter of sprouting angiogenesis, possibly by acting as a transcription activator. The chain is Transcription factor E2F8 (e2f8) from Xenopus tropicalis (Western clawed frog).